We begin with the raw amino-acid sequence, 213 residues long: MFTLRELPFAKDSMGDFLSPVAFDFHHGKHHQTYVNNLNNLIKGTDFEKSSLFAILTKSSGGVFNNAAQIYNHDFYWDCLSPKATALSDELKEALEKDFGSLEKFKEDFIKSATTLFGSGWNWAAYNLDTQKIEIIQTSNAQTPVTDKKVPLLVVDVWEHAYYIDHKNARPVYLEKFYGHVNWHFVSQCYEWAKKEGLGSVDYYINELVHKKA.

Histidine 26, histidine 73, aspartate 156, and histidine 160 together coordinate Fe cation.

Belongs to the iron/manganese superoxide dismutase family. In terms of assembly, homodimer. Requires Fe cation as cofactor.

The catalysed reaction is 2 superoxide + 2 H(+) = H2O2 + O2. In terms of biological role, destroys superoxide anion radicals which are normally produced within the cells and which are toxic to biological systems. This is Superoxide dismutase [Fe] (sodB) from Helicobacter pylori (strain J99 / ATCC 700824) (Campylobacter pylori J99).